Here is a 100-residue protein sequence, read N- to C-terminus: MICOS complex subunit MIC12 (100 aa).

The helical transmembrane segment at 10–26 threads the bilayer; the sequence is FATISSVAAASLYLYAI.

Belongs to the MICOS complex subunit Mic12 family. Component of the mitochondrial contact site and cristae organizing system (MICOS) complex.

The protein resides in the mitochondrion inner membrane. Functionally, component of the MICOS complex, a large protein complex of the mitochondrial inner membrane that plays crucial roles in the maintenance of crista junctions, inner membrane architecture, and formation of contact sites to the outer membrane. The sequence is that of MICOS complex subunit MIC12 (AIM5) from Vanderwaltozyma polyspora (strain ATCC 22028 / DSM 70294 / BCRC 21397 / CBS 2163 / NBRC 10782 / NRRL Y-8283 / UCD 57-17) (Kluyveromyces polysporus).